Reading from the N-terminus, the 119-residue chain is uncharacterized protein (119 aa).

This is an uncharacterized protein from Schizosaccharomyces pombe (strain 972 / ATCC 24843) (Fission yeast).